The following is a 319-amino-acid chain: Biotin synthase (319 aa).

The 230-residue stretch at isoleucine 44–arginine 273 folds into the Radical SAM core domain. [4Fe-4S] cluster contacts are provided by cysteine 62, cysteine 66, and cysteine 69. [2Fe-2S] cluster is bound by residues serine 106, cysteine 138, cysteine 198, and arginine 268.

It belongs to the radical SAM superfamily. Biotin synthase family. Homodimer. [4Fe-4S] cluster is required as a cofactor. [2Fe-2S] cluster serves as cofactor.

It carries out the reaction (4R,5S)-dethiobiotin + (sulfur carrier)-SH + 2 reduced [2Fe-2S]-[ferredoxin] + 2 S-adenosyl-L-methionine = (sulfur carrier)-H + biotin + 2 5'-deoxyadenosine + 2 L-methionine + 2 oxidized [2Fe-2S]-[ferredoxin]. The protein operates within cofactor biosynthesis; biotin biosynthesis; biotin from 7,8-diaminononanoate: step 2/2. Functionally, catalyzes the conversion of dethiobiotin (DTB) to biotin by the insertion of a sulfur atom into dethiobiotin via a radical-based mechanism. The polypeptide is Biotin synthase (Clostridium perfringens (strain ATCC 13124 / DSM 756 / JCM 1290 / NCIMB 6125 / NCTC 8237 / Type A)).